The following is a 206-amino-acid chain: MKAKREALISLFTAIKEGKVDEDIIDLLMLINSIKGVYTTSSCSGRIGIIEEPSLGAKPLSRWLIKVHRPMEFEEAIDALKKANKGIIFLKSQPPILHVVAENLEMAKLLHQIGLSSGFKYTTFKVISNRYLVEINGTEYLTVPLGRDGKVLVSEEYLKFAVEIGNEMLRRGKSRLPRLYKNFQELKEKVGEDELFIALKREILGT.

The protein belongs to the TYW3 family.

It carries out the reaction 4-demethyl-7-[(3S)-3-amino-3-carboxypropyl]wyosine(37) in tRNA(Phe) + S-adenosyl-L-methionine = 7-[(3S)-3-amino-3-carboxypropyl]wyosine(37) in tRNA(Phe) + S-adenosyl-L-homocysteine + H(+). In terms of biological role, S-adenosyl-L-methionine-dependent methyltransferase that acts as a component of the wyosine derivatives biosynthesis pathway. Probably methylates N-4 position of wybutosine-86 to produce wybutosine-72. The protein is tRNA(Phe) 7-((3-amino-3-carboxypropyl)-4-demethylwyosine(37)-N(4))-methyltransferase 2 of Pyrococcus abyssi (strain GE5 / Orsay).